The chain runs to 281 residues: Src-like-adapter (281 aa).

The tract at residues 1–20 is disordered; sequence MGNSMKSTSPPSERPLSSSE. Glycine 2 carries the N-myristoyl glycine lipid modification. Residues 7-20 show a composition bias toward low complexity; that stretch reads STSPPSERPLSSSE. The SH3 domain occupies 22–82; sequence LESDFLAVLT…PGICVARVYH (61 aa). The 92-residue stretch at 84–175 folds into the SH2 domain; that stretch reads WLFEGLGRDK…GLCCVLTTPC (92 aa). The tract at residues 190-281 is SLA C-terminal; the sequence is CTSPGSPVTL…FFSAPQYFED (92 aa). Serine 258 is modified (phosphoserine). Tyrosine 278 carries the phosphotyrosine modification.

Homodimer. Interacts with phosphorylated CBL, SYK and LAT. Homodimerization and interaction with phosphorylated CBL occurs via its C-terminal domain. Interacts with PDGFRB and EPHA2. Interacts with phosphorylated proteins ZAP70; CD3Z; VAV1 and LCP2 via its SH2 domain. Predominantly expressed in lymphoid tissues. Highly expressed in spleen, thymus and lymph nodes. Weakly expressed in lung and brain. Expressed in T-cells and at low level in B-cells.

The protein localises to the cytoplasm. The protein resides in the endosome. Functionally, adapter protein, which negatively regulates T-cell receptor (TCR) signaling. Inhibits T-cell antigen-receptor induced activation of nuclear factor of activated T-cells. Involved in the negative regulation of positive selection and mitosis of T-cells. May act by linking signaling proteins such as ZAP70 with CBL, leading to a CBL dependent degradation of signaling proteins. The chain is Src-like-adapter (Sla) from Mus musculus (Mouse).